Consider the following 340-residue polypeptide: S-adenosylmethionine:tRNA ribosyltransferase-isomerase (340 aa).

Belongs to the QueA family. In terms of assembly, monomer.

It is found in the cytoplasm. The enzyme catalyses 7-aminomethyl-7-carbaguanosine(34) in tRNA + S-adenosyl-L-methionine = epoxyqueuosine(34) in tRNA + adenine + L-methionine + 2 H(+). It functions in the pathway tRNA modification; tRNA-queuosine biosynthesis. Its function is as follows. Transfers and isomerizes the ribose moiety from AdoMet to the 7-aminomethyl group of 7-deazaguanine (preQ1-tRNA) to give epoxyqueuosine (oQ-tRNA). This chain is S-adenosylmethionine:tRNA ribosyltransferase-isomerase, found in Chlorobaculum parvum (strain DSM 263 / NCIMB 8327) (Chlorobium vibrioforme subsp. thiosulfatophilum).